We begin with the raw amino-acid sequence, 208 residues long: Putative archaetidylserine decarboxylase proenzyme (208 aa).

Ser172 serves as the catalytic Schiff-base intermediate with substrate; via pyruvic acid. A Pyruvic acid (Ser); by autocatalysis modification is found at Ser172.

The protein belongs to the phosphatidylserine decarboxylase family. PSD-A subfamily. As to quaternary structure, heterodimer of a large membrane-associated beta subunit and a small pyruvoyl-containing alpha subunit. Pyruvate is required as a cofactor. Is synthesized initially as an inactive proenzyme. Formation of the active enzyme involves a self-maturation process in which the active site pyruvoyl group is generated from an internal serine residue via an autocatalytic post-translational modification. Two non-identical subunits are generated from the proenzyme in this reaction, and the pyruvate is formed at the N-terminus of the alpha chain, which is derived from the carboxyl end of the proenzyme. The post-translation cleavage follows an unusual pathway, termed non-hydrolytic serinolysis, in which the side chain hydroxyl group of the serine supplies its oxygen atom to form the C-terminus of the beta chain, while the remainder of the serine residue undergoes an oxidative deamination to produce ammonia and the pyruvoyl prosthetic group on the alpha chain.

It is found in the cell membrane. It carries out the reaction archaetidylserine + H(+) = archaetidylethanolamine + CO2. Its function is as follows. Catalyzes the formation of archaetidylethanolamine (PtdEtn) from archaetidylserine (PtdSer). This is Putative archaetidylserine decarboxylase proenzyme from Methanosarcina mazei (strain ATCC BAA-159 / DSM 3647 / Goe1 / Go1 / JCM 11833 / OCM 88) (Methanosarcina frisia).